Here is a 421-residue protein sequence, read N- to C-terminus: Acetylglutamate kinase (421 aa).

Residues 1-252 (MASAKEISQY…PLESSVSITR (252 aa)) are acetylglutamate kinase. Substrate-binding positions include 59–60 (AG), Arg81, and Asn170. One can recognise an N-acetyltransferase domain in the interval 274 to 420 (ERVIRATTWK…HCTQHPPTLI (147 aa)).

This sequence in the N-terminal section; belongs to the acetylglutamate kinase family. ArgB subfamily.

The protein localises to the cytoplasm. It catalyses the reaction N-acetyl-L-glutamate + ATP = N-acetyl-L-glutamyl 5-phosphate + ADP. It functions in the pathway amino-acid biosynthesis; L-arginine biosynthesis; N(2)-acetyl-L-ornithine from L-glutamate: step 2/4. The polypeptide is Acetylglutamate kinase (argB) (Xylella fastidiosa (strain Temecula1 / ATCC 700964)).